The sequence spans 511 residues: Movement protein (511 aa).

Its subcellular location is the host cell junction. The protein resides in the host plasmodesma. The protein localises to the host cytoplasm. Transports viral genome to neighboring plant cells directly through plasmosdesmata, without any budding. The movement protein allows efficient cell to cell propagation, by bypassing the host cell wall barrier. This is Movement protein from Rice gall dwarf virus (RGDV).